Consider the following 194-residue polypeptide: Fatty acid metabolism regulator protein (194 aa).

The HTH tetR-type domain maps to 5-65 (RPKYMQIIDA…SLFKEKMGQF (61 aa)). The H-T-H motif DNA-binding region spans 28–47 (QVSKIAKQAGVADGTIYLYF).

In terms of assembly, homodimer. Binds to DNA.

Its subcellular location is the cytoplasm. Transcriptional regulator in fatty acid degradation. Represses transcription of genes required for fatty acid transport and beta-oxidation, including acdA, fadA, fadB, fadE, fadF, fadG, fadH, fadM, fadN, lcfA and lcfB. Binding of FadR to DNA is specifically inhibited by long chain fatty acyl-CoA compounds of 14-20 carbon atoms in length. In Bacillus subtilis (strain 168), this protein is Fatty acid metabolism regulator protein (fadR).